Here is a 464-residue protein sequence, read N- to C-terminus: Putative F-box/LRR-repeat protein At3g59160 (464 aa).

Positions 12 to 60 (KDMINDLPDALLCHVLSYLTTKEAASTSLLSRRWRYLLAFVPNLEFDDS) constitute an F-box domain. LRR repeat units lie at residues 172–198 (TLKI…HLES), 200–225 (MFDE…VLHH), 233–258 (SCSV…GMHE), 336–367 (VLCL…TIQS), 368–393 (TPKV…VFQG), and 408–433 (KIEK…VLHY).

This Arabidopsis thaliana (Mouse-ear cress) protein is Putative F-box/LRR-repeat protein At3g59160.